A 2168-amino-acid chain; its full sequence is Bromodomain adjacent to zinc finger domain protein 2B (2168 aa).

Disordered regions lie at residues 1-29, 140-348, 409-428, 459-479, 528-698, 719-740, 841-872, and 1021-1043; these read MESG…ASVV, FAPP…KQPQ, LKAG…SELR, SNPK…ENNH, STPF…LHIA, GTSS…RRVT, MEGR…PPNV, and RKKA…LNKE. The span at 8 to 29 shows a compositional bias: low complexity; sequence PSSAASSTTPTSSSTPSVASVV. 2 stretches are compositionally biased toward polar residues: residues 146-163 and 171-193; these read NHDS…SNRN and GSIN…STTA. 2 stretches are compositionally biased toward low complexity: residues 194–204 and 240–263; these read SSSMGQTKSTS and ESSS…ISSS. Over residues 264–291 the composition is skewed to acidic residues; that stretch reads DSDDLEEDEEEEDQSIEESEDDDSDSES. The segment covering 307–325 has biased composition (basic and acidic residues); the sequence is SDPKADGQKATEKAQEKRI. Residues 335–348 show a composition bias toward low complexity; it reads SQTHSFQSQQKQPQ. Polar residues-rich tracts occupy residues 461–479 and 528–551; these read PKAT…ENNH and STPF…QTPV. Basic and acidic residues predominate over residues 592 to 605; that stretch reads RGTDSDIPSSKDSE. The span at 606-663 shows a compositional bias: acidic residues; sequence DSNEDEEEDDEEEDEEDDEDDESDDSQSESDSNSESDTEGSEEEDDDDKDQDESDSDT. Residues 670–693 are compositionally biased toward polar residues; it reads MKLNKTTSSVKSPSMSLTGHSTPR. Over residues 720–732 the composition is skewed to low complexity; it reads TSSSTLTSSPHSG. Positions 739–810 constitute an MBD domain; that stretch reads VTDERELRIP…DNFSFSAKIR (72 aa). Over residues 841 to 861 the composition is skewed to basic and acidic residues; the sequence is MEGRRGRPPNPDRQRAREESR. The stretch at 883-1061 forms a coiled coil; sequence AKLLRKLQAQ…ELEMAKELKK (179 aa). One can recognise a DDT domain in the interval 1087–1152; that stretch reads GSTFSDCLMV…LSAAVCDPGL (66 aa). A disordered region spans residues 1265–1341; that stretch reads KRDTSGGIDL…CEDEDEGDQA (77 aa). Over residues 1297–1321 the composition is skewed to acidic residues; that stretch reads SDYDDDDDDDSDDQGDEDDEDEEDK. Over residues 1322–1331 the composition is skewed to basic and acidic residues; it reads EDKKGKKTDI. The stretch at 1334–1375 forms a coiled coil; it reads DEDEGDQAASVEELEKQIEKLSKQQSQYRRKLFDASHSLRSV. Lys-1425 participates in a covalent cross-link: Glycyl lysine isopeptide (Lys-Gly) (interchain with G-Cter in SUMO2). An N6-acetyllysine modification is found at Lys-1462. Ser-1465 and Ser-1467 each carry phosphoserine. Over residues 1503–1533 the composition is skewed to polar residues; that stretch reads SGKHSLGSVQSTATQSNVEKADSNNLFNTGS. Disordered stretches follow at residues 1503 to 1542, 1582 to 1607, and 1670 to 1694; these read SGKH…FYSP, SLVT…SSAQ, and TSNV…AQPA. Residues 1588–1600 show a composition bias toward pro residues; the sequence is SQPPSKSPSPTPA. Polar residues predominate over residues 1670–1692; sequence TSNVASSKSESPVPQNEKATSAQ. A Phosphoserine modification is found at Ser-1680. The segment at 1931–1981 adopts a PHD-type zinc-finger fold; that stretch reads KVYCQICRKGDNEELLLLCDGCDKGCHTYCHRPKITTIPDGDWFCPACIAK. The disordered stretch occupies residues 1998–2040; that stretch reads KTNESKKGKKVTLTGDTEDEDSASTSSSLKRGNKDLKKRKMEE. Thr-2014 bears the Phosphothreonine mark. Ser-2019 carries the phosphoserine modification. Basic and acidic residues predominate over residues 2029–2040; it reads GNKDLKKRKMEE. Residues 2060-2164 enclose the Bromo domain; it reads RDDSKDLALC…KYFEKKWTDT (105 aa).

This sequence belongs to the WAL family. As to quaternary structure, component of the BRF-1 ISWI chromatin remodeling complex, at least composed of SMARCA1 and BAZ2B, which regulates the spacing of histone octamers on the DNA template to facilitate access to DNA. Within the BRF-1 ISWI chromatin remodeling complex interacts with SMARCA1; the interaction is direct. Component of the BRF-5 ISWI chromatin remodeling complex, at least composed of SMARCA5/SNF2H and BAZ2B, which regulates the spacing of histone octamers on the DNA template to facilitate access to DNA. Within the BRF-5 ISWI chromatin remodeling complex interacts with SMARCA5/SNF2H; the interaction is direct. Interacts with acetylated lysine residues on histone H1.4, H2A, H2B, H3 and H4 (in vitro). Interacts with EHMT1. Expressed at varying levels in several tissues, whereas a smaller transcript was expressed specifically in testis.

It is found in the nucleus. Functionally, regulatory subunit of the ATP-dependent BRF-1 and BRF-5 ISWI chromatin remodeling complexes, which form ordered nucleosome arrays on chromatin and facilitate access to DNA during DNA-templated processes such as DNA replication, transcription, and repair. Both complexes regulate the spacing of nucleosomes along the chromatin and have the ability to slide mononucleosomes to the center of a DNA template. The BRF-1 ISWI chromatin remodeling complex has a lower ATP hydrolysis rate than the BRF-5 ISWI chromatin remodeling complex. Chromatin reader protein, which may play a role in transcriptional regulation via interaction with ISWI. Involved in positively modulating the rate of age-related behavioral deterioration. Represses the expression of mitochondrial function-related genes, perhaps by occupying their promoter regions, working in concert with histone methyltransferase EHMT1. In Homo sapiens (Human), this protein is Bromodomain adjacent to zinc finger domain protein 2B (BAZ2B).